Here is a 117-residue protein sequence, read N- to C-terminus: Large ribosomal subunit protein bL20c (117 aa).

It belongs to the bacterial ribosomal protein bL20 family.

The protein resides in the plastid. Its function is as follows. Binds directly to 23S ribosomal RNA and is necessary for the in vitro assembly process of the 50S ribosomal subunit. It is not involved in the protein synthesizing functions of that subunit. The sequence is that of Large ribosomal subunit protein bL20c (rpl20) from Euglena longa (Euglenophycean alga).